The following is a 1218-amino-acid chain: Coatomer subunit alpha-3 (1218 aa).

WD repeat units follow at residues 7–48, 49–88, 91–132, 133–172, 202–241, 246–285, 288–326, 363–404, and 450–489; these read TKSN…DRFD, EHDG…CLFT, GHLD…AVLT, GHNH…KKTV, GHDR…AWEV, GHMN…GIQT, REHD…PAFS, SLNQ…AGRT, and PLPI…GELQ. The interval 854–893 is disordered; the sequence is AMANGGDGFDAEEGEANEEDGEEGGWDLEDLELPPEAETP. Residues 862–888 are compositionally biased toward acidic residues; sequence FDAEEGEANEEDGEEGGWDLEDLELPP.

As to quaternary structure, oligomeric complex that consists of at least the alpha, beta, beta', gamma, delta, epsilon and zeta subunits.

It localises to the cytoplasm. The protein localises to the golgi apparatus membrane. Its subcellular location is the cytoplasmic vesicle. It is found in the COPI-coated vesicle membrane. Functionally, the coatomer is a cytosolic protein complex that binds to dilysine motifs and reversibly associates with Golgi non-clathrin-coated vesicles, which further mediate biosynthetic protein transport from the ER, via the Golgi up to the trans Golgi network. Coatomer complex is required for budding from Golgi membranes, and is essential for the retrograde Golgi-to-ER transport of dilysine-tagged proteins. The chain is Coatomer subunit alpha-3 from Oryza sativa subsp. japonica (Rice).